The chain runs to 244 residues: EEF1A lysine methyltransferase 2 (244 aa).

A disordered region spans residues 1 to 27; sequence MNADAEGHSGAVVPAQSPEGSSAADDF. The residue at position 21 (Ser21) is a Phosphoserine.

Belongs to the class I-like SAM-binding methyltransferase superfamily. EFM4 family.

It is found in the cytoplasm. It localises to the nucleus. It catalyses the reaction L-lysyl-[protein] + 3 S-adenosyl-L-methionine = N(6),N(6),N(6)-trimethyl-L-lysyl-[protein] + 3 S-adenosyl-L-homocysteine + 3 H(+). Protein-lysine methyltransferase that selectively catalyzes the trimethylation of EEF1A at 'Lys-318'. This chain is EEF1A lysine methyltransferase 2, found in Mus musculus (Mouse).